A 189-amino-acid chain; its full sequence is Interleukin-23 subunit alpha (189 aa).

An N-terminal signal peptide occupies residues Met1–Thr19.

This sequence belongs to the IL-6 superfamily. Heterodimer with IL12B; disulfide-linked. The heterodimer is known as interleukin IL-23. Interacts with IL23R; this interaction enables recruitment of IL12RB1.

It localises to the secreted. Associates with IL12B to form the pro-inflammatory cytokine IL-23 that plays different roles in innate and adaptive immunity. Released by antigen-presenting cells such as dendritic cells or macrophages, binds to a heterodimeric receptor complex composed of IL12RB1 and IL23R to activate JAK2 and TYK2 which then phosphorylate the receptor to form a docking site leading to the phosphorylation of STAT3 and STAT4. This process leads to activation of several pathways including p38 MAPK or NF-kappa-B and promotes the production of pro-inflammatory cytokines such as interleukin-17A/IL17A. In turn, participates in the early and effective intracellular bacterial clearance. Promotes the expansion and survival of T-helper 17 cells, a CD4-positive helper T-cell subset that produces IL-17, as well as other IL-17-producing cells. The chain is Interleukin-23 subunit alpha (IL23A) from Cavia porcellus (Guinea pig).